Here is a 697-residue protein sequence, read N- to C-terminus: Phosphatase and actin regulator 4-B (697 aa).

The stretch at 42–67 (EVLERKISMRKPREELVKRGLIVDVP) is one RPEL 1 repeat. 2 disordered regions span residues 63–381 (IVDV…LTLA) and 450–569 (LKVP…SKDE). Residues 189-202 (HVPEKTSEKYRPKS) are compositionally biased toward basic and acidic residues. 2 stretches are compositionally biased toward pro residues: residues 317–326 (PSPPLPPKRA) and 370–380 (APNPPVPPLTL). Acidic residues-rich tracts occupy residues 454 to 469 (DDDD…DESL), 501 to 514 (QEED…DTDS), and 522 to 532 (EEDEDEEEEET). RPEL repeat units follow at residues 579–604 (TQLN…QKNE) and 616–641 (RRLT…RFNE).

It belongs to the phosphatase and actin regulator family. Binds ppp1ca and actin.

It is found in the cytoplasm. The protein resides in the cell projection. It localises to the lamellipodium. Its function is as follows. Regulator of protein phosphatase 1 (PP1) required for neural tube and optic fissure closure, and enteric neural crest cell (ENCCs) migration during development. Acts as an activator of PP1. During neural tube closure, localizes to the ventral neural tube and activates PP1, leading to down-regulate cell proliferation within cranial neural tissue and the neural retina. Also acts as a regulator of migration of enteric neural crest cells (ENCCs) by activating PP1, leading to repression of the integrin signaling through the rho/rock pathway. The polypeptide is Phosphatase and actin regulator 4-B (phactr4-b) (Xenopus laevis (African clawed frog)).